Consider the following 231-residue polypeptide: Cytidylate kinase (231 aa).

12–20 contributes to the ATP binding site; the sequence is GPSGAGKGT.

The protein belongs to the cytidylate kinase family. Type 1 subfamily.

Its subcellular location is the cytoplasm. The catalysed reaction is CMP + ATP = CDP + ADP. It carries out the reaction dCMP + ATP = dCDP + ADP. This is Cytidylate kinase from Shewanella amazonensis (strain ATCC BAA-1098 / SB2B).